Consider the following 676-residue polypeptide: Pescadillo homolog (676 aa).

A disordered region spans residues 277–296 (TIEGSNKQSNNSSNQEVSRD). Low complexity predominate over residues 281-291 (SNKQSNNSSNQ). The region spanning 351 to 467 (EAGALFAPFT…KLLRPDLYAP (117 aa)) is the BRCT domain. The segment at 471 to 676 (LPPHLSPWVK…RRKLEKTGEK (206 aa)) is disordered. The segment covering 494-519 (EQEEEGEAEMAGEEEEEESDEEMEEA) has biased composition (acidic residues). Basic and acidic residues predominate over residues 520-531 (PETKKADAKADE). Acidic residues-rich tracts occupy residues 532 to 541 (SESEDEDESV) and 548 to 581 (ADSDDDESESGQEEEDFGGFDDNEAASESEDEEE). Residues 571 to 676 (EAASESEDEE…RRKLEKTGEK (106 aa)) adopt a coiled-coil conformation. The segment covering 582–592 (AARTQHQKELE) has biased composition (basic and acidic residues). Residues 611-624 (KKKSSQAKKIAAKK) show a composition bias toward basic residues. Residues 625–635 (RKEEEELERQK) show a composition bias toward basic and acidic residues.

It belongs to the pescadillo family. Component of the NOP7 complex, composed of erb1, nop7 and ytm1. The complex is held together by erb1, which interacts with nop7 via its N-terminal domain and with ytm1 via a high-affinity interaction between the seven-bladed beta-propeller domains of the 2 proteins. The NOP7 complex associates with the 66S pre-ribosome.

It localises to the nucleus. Its subcellular location is the nucleolus. The protein resides in the nucleoplasm. Functionally, component of the NOP7 complex, which is required for maturation of the 25S and 5.8S ribosomal RNAs and formation of the 60S ribosome. This is Pescadillo homolog (nop7) from Aspergillus terreus (strain NIH 2624 / FGSC A1156).